Reading from the N-terminus, the 237-residue chain is Ribonuclease PH (237 aa).

Phosphate-binding positions include R86 and 124–126 (GTR).

The protein belongs to the RNase PH family. In terms of assembly, homohexameric ring arranged as a trimer of dimers.

The enzyme catalyses tRNA(n+1) + phosphate = tRNA(n) + a ribonucleoside 5'-diphosphate. In terms of biological role, phosphorolytic 3'-5' exoribonuclease that plays an important role in tRNA 3'-end maturation. Removes nucleotide residues following the 3'-CCA terminus of tRNAs; can also add nucleotides to the ends of RNA molecules by using nucleoside diphosphates as substrates, but this may not be physiologically important. Probably plays a role in initiation of 16S rRNA degradation (leading to ribosome degradation) during starvation. The polypeptide is Ribonuclease PH (Methylobacterium sp. (strain 4-46)).